The primary structure comprises 261 residues: uncharacterized protein (261 aa).

It belongs to the FwdC/FmdC family.

This is an uncharacterized protein from Methanocaldococcus jannaschii (strain ATCC 43067 / DSM 2661 / JAL-1 / JCM 10045 / NBRC 100440) (Methanococcus jannaschii).